A 257-amino-acid chain; its full sequence is Snake venom serine protease rhinocerase 4 (257 aa).

The signal sequence occupies residues 1–17; that stretch reads VLIRVLANLLVLQLSYA. A propeptide spanning residues 18–23 is cleaved from the precursor; sequence QKSSEL. The 225-residue stretch at 24–248 folds into the Peptidase S1 domain; the sequence is VIGGAECNIN…YTDWIRSIIG (225 aa). 6 cysteine pairs are disulfide-bonded: Cys-30–Cys-162, Cys-49–Cys-65, Cys-97–Cys-255, Cys-141–Cys-209, Cys-173–Cys-188, and Cys-199–Cys-224. The N-linked (GlcNAc...) asparagine glycan is linked to Asn-43. The active-site Charge relay system is the His-64. N-linked (GlcNAc...) asparagine glycosylation is found at Asn-78 and Asn-100. Asp-109 serves as the catalytic Charge relay system. The Charge relay system role is filled by Ser-203. N-linked (GlcNAc...) asparagine glycosylation occurs at Asn-250.

Belongs to the peptidase S1 family. Snake venom subfamily. As to expression, expressed by the venom gland.

The protein resides in the secreted. Its function is as follows. Snake venom serine protease that may act in the hemostasis system of the prey. The protein is Snake venom serine protease rhinocerase 4 of Bitis rhinoceros (West African gaboon viper).